The sequence spans 105 residues: Thioredoxin (105 aa).

A Thioredoxin domain is found at Val-2–Met-105. Catalysis depends on nucleophile residues Cys-32 and Cys-35. A disulfide bridge connects residues Cys-32 and Cys-35. Residues Cys-69 and Cys-73 each carry the S-nitrosocysteine modification.

It belongs to the thioredoxin family. May be nitrosylated on several cysteine residues, depending on the oxidation state. Nitrosylated Cys-73 may serve as donor for nitrosylation of target proteins.

It is found in the nucleus. Its subcellular location is the cytoplasm. It localises to the secreted. Functionally, participates in various redox reactions through the reversible oxidation of its active center dithiol to a disulfide and catalyzes dithiol-disulfide exchange reactions. Plays a role in the reversible S-nitrosylation of cysteine residues in target proteins, and thereby contributes to the response to intracellular nitric oxide. Nitrosylates the active site Cys of CASP3 in response to nitric oxide (NO), and thereby inhibits caspase-3 activity. Induces the FOS/JUN AP-1 DNA binding activity in ionizing radiation (IR) cells through its oxidation/reduction status and stimulates AP-1 transcriptional activity. This is Thioredoxin (TXN) from Ophiophagus hannah (King cobra).